Consider the following 172-residue polypeptide: Adenine phosphoribosyltransferase (172 aa).

This sequence belongs to the purine/pyrimidine phosphoribosyltransferase family. In terms of assembly, homodimer.

The protein localises to the cytoplasm. The catalysed reaction is AMP + diphosphate = 5-phospho-alpha-D-ribose 1-diphosphate + adenine. Its pathway is purine metabolism; AMP biosynthesis via salvage pathway; AMP from adenine: step 1/1. In terms of biological role, catalyzes a salvage reaction resulting in the formation of AMP, that is energically less costly than de novo synthesis. The protein is Adenine phosphoribosyltransferase of Methanococcus maripaludis (strain C7 / ATCC BAA-1331).